Here is a 258-residue protein sequence, read N- to C-terminus: Transmembrane O-methyltransferase homolog (258 aa).

Residues Glu-104, 106-107, Ser-112, Glu-130, and Ser-160 each bind S-adenosyl-L-methionine; that span reads GT.

This sequence belongs to the class I-like SAM-binding methyltransferase superfamily. Cation-dependent O-methyltransferase family. Interacts with LHFPL5, PCDH15, TMC1, TMC2 and TMIE. The interaction of TOMT with TMC1 and TMC2 is required for the transportation of TMC1/2 into the stereocilia of hair cells. Interacts directly with TMC1. Widely expressed with high levels in outer and inner hair cells of the cochlea and vestibule.

The protein resides in the cytoplasm. The protein localises to the endoplasmic reticulum. It carries out the reaction a catechol + S-adenosyl-L-methionine = a guaiacol + S-adenosyl-L-homocysteine + H(+). In terms of biological role, catalyzes the O-methylation, and thereby the inactivation, of catecholamine neurotransmitters and catechol hormones. Required for auditory function. Component of the cochlear hair cell's mechanotransduction (MET) machinery. Involved in the assembly of the asymmetric tip-link MET complex. Required for transportation of TMC1 and TMC2 proteins into the mechanically sensitive stereocilia of the hair cells. The function in MET is independent of the enzymatic activity. The chain is Transmembrane O-methyltransferase homolog from Mus musculus (Mouse).